We begin with the raw amino-acid sequence, 486 residues long: uncharacterized protein (486 aa).

24-35 contributes to the NAD(+) binding site; it reads IVHLGFGAFHRA.

It belongs to the mannitol dehydrogenase family. UxuB subfamily.

This is an uncharacterized protein from Escherichia coli (strain K12).